The primary structure comprises 248 residues: Indole-3-glycerol phosphate synthase (248 aa).

Belongs to the TrpC family.

The catalysed reaction is 1-(2-carboxyphenylamino)-1-deoxy-D-ribulose 5-phosphate + H(+) = (1S,2R)-1-C-(indol-3-yl)glycerol 3-phosphate + CO2 + H2O. The protein operates within amino-acid biosynthesis; L-tryptophan biosynthesis; L-tryptophan from chorismate: step 4/5. This chain is Indole-3-glycerol phosphate synthase, found in Sulfolobus acidocaldarius (strain ATCC 33909 / DSM 639 / JCM 8929 / NBRC 15157 / NCIMB 11770).